We begin with the raw amino-acid sequence, 125 residues long: UPF0231 protein in hemN 3'region (125 aa).

This sequence belongs to the UPF0231 family.

The polypeptide is UPF0231 protein in hemN 3'region (Mannheimia haemolytica (Pasteurella haemolytica)).